Here is a 294-residue protein sequence, read N- to C-terminus: 33 kDa chaperonin (294 aa).

2 disulfides stabilise this stretch: Cys236–Cys238 and Cys269–Cys272.

Belongs to the HSP33 family. Post-translationally, under oxidizing conditions two disulfide bonds are formed involving the reactive cysteines. Under reducing conditions zinc is bound to the reactive cysteines and the protein is inactive.

It localises to the cytoplasm. In terms of biological role, redox regulated molecular chaperone. Protects both thermally unfolding and oxidatively damaged proteins from irreversible aggregation. Plays an important role in the bacterial defense system toward oxidative stress. This Desulfotalea psychrophila (strain LSv54 / DSM 12343) protein is 33 kDa chaperonin.